Consider the following 147-residue polypeptide: Putative pre-16S rRNA nuclease (147 aa).

The protein belongs to the YqgF nuclease family.

The protein localises to the cytoplasm. Could be a nuclease involved in processing of the 5'-end of pre-16S rRNA. In Limosilactobacillus reuteri (strain DSM 20016) (Lactobacillus reuteri), this protein is Putative pre-16S rRNA nuclease.